The chain runs to 440 residues: L-gulonolactone oxidase (440 aa).

The 171-residue stretch at 17–187 (YGCCPEMYFQ…LTVTLQCVPQ (171 aa)) folds into the FAD-binding PCMH-type domain. Pros-8alpha-FAD histidine is present on H54. The chain crosses the membrane as a helical span at residues 253 to 273 (FYLLEFLLWISTFLPGLVGWI).

Belongs to the oxygen-dependent FAD-linked oxidoreductase family. The cofactor is FAD.

Its subcellular location is the microsome membrane. It localises to the endoplasmic reticulum membrane. The catalysed reaction is L-gulono-1,4-lactone + O2 = L-ascorbate + H2O2 + H(+). It participates in cofactor biosynthesis; L-ascorbate biosynthesis via UDP-alpha-D-glucuronate pathway; L-ascorbate from UDP-alpha-D-glucuronate: step 4/4. Functionally, oxidizes L-gulono-1,4-lactone to hydrogen peroxide and L-xylo-hexulonolactone which spontaneously isomerizes to L-ascorbate. The protein is L-gulonolactone oxidase (GULO) of Bos taurus (Bovine).